The sequence spans 282 residues: Leucine-rich protein (282 aa).

Its function is as follows. Not essential for viability or growth. Nevertheless, uncontrolled production in E.coli is detrimental to the normal physiology of the bacteria. The chain is Leucine-rich protein (lrp) from Streptococcus dysgalactiae subsp. equisimilis (Streptococcus equisimilis).